The primary structure comprises 223 residues: Ubiquitin carboxyl-terminal hydrolase isozyme L1 (223 aa).

At methionine 1 the chain carries N-acetylmethionine. The 220-residue stretch at 2–221 folds into the UCH catalytic domain; sequence QLKPMEINPE…VRFSAVALCK (220 aa). Residues 5 to 10 are interaction with ubiquitin; sequence PMEINP. Cysteine 90 serves as the catalytic Nucleophile. The residue at position 125 (serine 125) is a Phosphoserine. The active-site Proton donor is the histidine 161. The tract at residues 211-216 is interaction with ubiquitin; it reads EVRFSA. Cysteine 220 carries the S-farnesyl cysteine lipid modification. The propeptide at 221 to 223 is removed in mature form; it reads KAA.

It belongs to the peptidase C12 family. Monomer. Homodimer. Interacts with COPS5 and SNCA. O-glycosylated.

It is found in the cytoplasm. The protein resides in the endoplasmic reticulum membrane. It carries out the reaction Thiol-dependent hydrolysis of ester, thioester, amide, peptide and isopeptide bonds formed by the C-terminal Gly of ubiquitin (a 76-residue protein attached to proteins as an intracellular targeting signal).. Ubiquitin-protein hydrolase involved both in the processing of ubiquitin precursors and of ubiquitinated proteins. This enzyme is a thiol protease that recognizes and hydrolyzes a peptide bond at the C-terminal glycine of ubiquitin. Also binds to free monoubiquitin and may prevent its degradation in lysosomes. The homodimer may have ATP-independent ubiquitin ligase activity. The chain is Ubiquitin carboxyl-terminal hydrolase isozyme L1 (UCHL1) from Equus caballus (Horse).